We begin with the raw amino-acid sequence, 348 residues long: Ion-translocating oxidoreductase complex subunit D (348 aa).

5 helical membrane-spanning segments follow: residues 19–39 (FMLW…AFFG), 41–61 (GVVI…IVVA), 66–86 (KSTT…ILAM), 87–107 (AIPP…ALLL), and 122–142 (PAMV…TSWL). Residue Thr186 is modified to FMN phosphoryl threonine. 5 helical membrane-spanning segments follow: residues 212 to 232 (IFAR…LFLL), 236 to 256 (IIHW…SALT), 265 to 285 (LNVL…FIAT), 291 to 311 (SITP…AYLI), and 315 to 335 (GSYP…VPLI).

The protein belongs to the NqrB/RnfD family. In terms of assembly, the complex is composed of six subunits: RnfA, RnfB, RnfC, RnfD, RnfE and RnfG. Requires FMN as cofactor.

It localises to the cell inner membrane. Functionally, part of a membrane-bound complex that couples electron transfer with translocation of ions across the membrane. The polypeptide is Ion-translocating oxidoreductase complex subunit D (Haemophilus ducreyi (strain 35000HP / ATCC 700724)).